Here is a 268-residue protein sequence, read N- to C-terminus: Shikimate dehydrogenase (NADP(+)) (268 aa).

Shikimate contacts are provided by residues 13–15 (SLS) and T60. The active-site Proton acceptor is K64. An NADP(+)-binding site is contributed by E76. Shikimate-binding residues include N85 and D100. NADP(+) contacts are provided by residues 124 to 128 (GAGGA), 148 to 153 (NRTMAR), and I209. Y211 contacts shikimate. Residue G232 participates in NADP(+) binding.

Belongs to the shikimate dehydrogenase family. As to quaternary structure, homodimer.

It carries out the reaction shikimate + NADP(+) = 3-dehydroshikimate + NADPH + H(+). Its pathway is metabolic intermediate biosynthesis; chorismate biosynthesis; chorismate from D-erythrose 4-phosphate and phosphoenolpyruvate: step 4/7. Its function is as follows. Involved in the biosynthesis of the chorismate, which leads to the biosynthesis of aromatic amino acids. Catalyzes the reversible NADPH linked reduction of 3-dehydroshikimate (DHSA) to yield shikimate (SA). The protein is Shikimate dehydrogenase (NADP(+)) of Staphylococcus aureus (strain USA300).